The following is a 675-amino-acid chain: Calcium channel YVC1 (675 aa).

The Cytoplasmic segment spans residues 1-236 (MVSANGDLHL…PVRLKAPVYQ (236 aa)). Residues 237 to 257 (NYLQMIFSFLFLGLYTLVVNG) traverse the membrane as a helical segment. Residues 258–295 (KDSERVQSFDLLESIFYVFNTGFILDELTKLYYIGYAH) are Vacuolar-facing. The helical transmembrane segment at 296 to 316 (LSFWNLFNDTTYLIITFAMGF) threads the bilayer. Residues 317-335 (RAMSVTPLNAKYSSEDWDK) are Cytoplasmic-facing. Residues 336–355 (ISYRVLSCAAPFVWSRLLLY) traverse the membrane as a helical segment. The Vacuolar portion of the chain corresponds to 356 to 376 (LESQRFIGIMLVILKHMMKES). A helical transmembrane segment spans residues 377–397 (IVFFFLLFLIMIGFTQGFLGL). Topologically, residues 398-405 (DSADGKRD) are cytoplasmic. The chain crosses the membrane as a helical span at residues 406-426 (ITGPILGNLTITVLGLGSFDV). Over 427-436 (FEEFAPPYAA) the chain is Vacuolar. A helical membrane pass occupies residues 437-457 (ILYYGYYFIVSVILLNILIAL). The Cytoplasmic portion of the chain corresponds to 458–675 (YSTAYQKVID…EKLDIKDKKE (218 aa)). Position 636 is a phosphothreonine (threonine 636).

This sequence belongs to the transient receptor (TC 1.A.4) family.

It localises to the vacuole membrane. In terms of biological role, required for release of calcium ions from the vacuole in response to hyperosmotic shock. This is Calcium channel YVC1 from Saccharomyces cerevisiae (strain ATCC 204508 / S288c) (Baker's yeast).